We begin with the raw amino-acid sequence, 92 residues long: Small ribosomal subunit protein uS15 (92 aa).

This sequence belongs to the universal ribosomal protein uS15 family. In terms of assembly, part of the 30S ribosomal subunit. Forms a bridge to the 50S subunit in the 70S ribosome, contacting the 23S rRNA.

Functionally, one of the primary rRNA binding proteins, it binds directly to 16S rRNA where it helps nucleate assembly of the platform of the 30S subunit by binding and bridging several RNA helices of the 16S rRNA. In terms of biological role, forms an intersubunit bridge (bridge B4) with the 23S rRNA of the 50S subunit in the ribosome. The polypeptide is Small ribosomal subunit protein uS15 (Symbiobacterium thermophilum (strain DSM 24528 / JCM 14929 / IAM 14863 / T)).